Reading from the N-terminus, the 231-residue chain is Putative S-adenosylmethionine-dependent methyltransferase RcsF (231 aa).

In terms of domain architecture, TsaA-like spans 5–142; the sequence is VSPIGYIRSC…YVPYADAVAD (138 aa). Residues 22–24, 63–64, R91, and 122–125 contribute to the S-adenosyl-L-methionine site; these read PRQ, HQ, and LDGT.

Belongs to the tRNA methyltransferase O family.

This Pseudomonas aeruginosa (strain ATCC 15692 / DSM 22644 / CIP 104116 / JCM 14847 / LMG 12228 / 1C / PRS 101 / PAO1) protein is Putative S-adenosylmethionine-dependent methyltransferase RcsF (rcsF).